The chain runs to 147 residues: Hemoglobin subunit beta-1 (147 aa).

Residues 3–147 form the Globin domain; that stretch reads EWTAAERRHV…VVSALGRQYH (145 aa). The heme b site is built by His-64 and His-93.

Belongs to the globin family. As to quaternary structure, hb 1 is a heterotetramer of two alpha-1 and two beta-1 chains. Red blood cells.

Functionally, involved in oxygen transport from gills to the various peripheral tissues. This Gadus morhua (Atlantic cod) protein is Hemoglobin subunit beta-1 (hbb1).